The following is a 940-amino-acid chain: Insulin receptor substrate 1 (940 aa).

The 102-residue stretch at 8-109 (GMVLSGYHKK…WLDKLLLLQR (102 aa)) folds into the PH domain. One can recognise an IRS-type PTB domain in the interval 122–236 (YEHVWQVIIQ…SAMSAKTDSN (115 aa)). S284, S285, and S340 each carry phosphoserine. Residue Y407 is modified to Phosphotyrosine; by INSR. A YXXM motif 1 motif is present at residues 407 to 410 (YIPM). The span at 523-540 (NRSQNNISKEGPISGTST) shows a compositional bias: polar residues. The disordered stretch occupies residues 523 to 549 (NRSQNNISKEGPISGTSTNREKKSTSA). S548 bears the Phosphoserine mark. The YXXM motif 2 motif lies at 639 to 642 (YLEM). Y883 bears the Phosphotyrosine; by INSR mark. The segment at 895-915 (NPAKYLKRGSRESPPVATCAE) is disordered. S904 and S907 each carry phosphoserine. Residue Y920 is modified to Phosphotyrosine; by INSR.

Bindings to phosphatidylinositol 3-kinase and SHP2.

Functionally, activates phosphatidylinositol 3-kinase when bound to the regulatory p85 subunit. May mediate the control of various cellular processes by insulin-like peptides. When phosphorylated by the insulin receptor binds specifically to various cellular proteins containing SH2 domains. Involved in control of cell proliferation, cell size, and body and organ growth throughout development. Also has a role in a signaling pathway controlling the physiological response required to endure periods of low nutrient conditions. Insulin/insulin-like growth factor (IGF) signaling pathway has a role in regulating aging and is necessary in the ovary for vitellogenic maturation. The sequence is that of Insulin receptor substrate 1 from Drosophila ananassae (Fruit fly).